A 342-amino-acid chain; its full sequence is Phosphate acyltransferase (342 aa).

The protein belongs to the PlsX family. Homodimer. Probably interacts with PlsY.

The protein resides in the cytoplasm. It catalyses the reaction a fatty acyl-[ACP] + phosphate = an acyl phosphate + holo-[ACP]. Its pathway is lipid metabolism; phospholipid metabolism. Its function is as follows. Catalyzes the reversible formation of acyl-phosphate (acyl-PO(4)) from acyl-[acyl-carrier-protein] (acyl-ACP). This enzyme utilizes acyl-ACP as fatty acyl donor, but not acyl-CoA. In Shewanella halifaxensis (strain HAW-EB4), this protein is Phosphate acyltransferase.